The following is a 212-amino-acid chain: uncharacterized protein (212 aa).

Residues Gly-53 and Glu-74 each coordinate S-adenosyl-L-methionine.

Belongs to the methyltransferase superfamily. YrrT family.

Its function is as follows. Could be a S-adenosyl-L-methionine-dependent methyltransferase. This is an uncharacterized protein from Exiguobacterium sibiricum (strain DSM 17290 / CCUG 55495 / CIP 109462 / JCM 13490 / 255-15).